The following is a 723-amino-acid chain: Fatty acid oxidation complex subunit alpha (723 aa).

The enoyl-CoA hydratase/isomerase stretch occupies residues M1–D189. D296 is a substrate binding site. The interval S311–I723 is 3-hydroxyacyl-CoA dehydrogenase. Residues M325, D344, V401–E403, K408, and S430 contribute to the NAD(+) site. The active-site For 3-hydroxyacyl-CoA dehydrogenase activity is H451. N454 serves as a coordination point for NAD(+). Positions 501 and 661 each coordinate substrate.

The protein in the N-terminal section; belongs to the enoyl-CoA hydratase/isomerase family. This sequence in the C-terminal section; belongs to the 3-hydroxyacyl-CoA dehydrogenase family. Heterotetramer of two alpha chains (FadB) and two beta chains (FadA).

It catalyses the reaction a (3S)-3-hydroxyacyl-CoA + NAD(+) = a 3-oxoacyl-CoA + NADH + H(+). It carries out the reaction a (3S)-3-hydroxyacyl-CoA = a (2E)-enoyl-CoA + H2O. The catalysed reaction is a 4-saturated-(3S)-3-hydroxyacyl-CoA = a (3E)-enoyl-CoA + H2O. The enzyme catalyses (3S)-3-hydroxybutanoyl-CoA = (3R)-3-hydroxybutanoyl-CoA. It catalyses the reaction a (3Z)-enoyl-CoA = a 4-saturated (2E)-enoyl-CoA. It carries out the reaction a (3E)-enoyl-CoA = a 4-saturated (2E)-enoyl-CoA. It functions in the pathway lipid metabolism; fatty acid beta-oxidation. Functionally, involved in the aerobic and anaerobic degradation of long-chain fatty acids via beta-oxidation cycle. Catalyzes the formation of 3-oxoacyl-CoA from enoyl-CoA via L-3-hydroxyacyl-CoA. It can also use D-3-hydroxyacyl-CoA and cis-3-enoyl-CoA as substrate. This Vibrio campbellii (strain ATCC BAA-1116) protein is Fatty acid oxidation complex subunit alpha.